Here is a 227-residue protein sequence, read N- to C-terminus: Probable minor pilin MMP0600 (227 aa).

The propeptide occupies 1 to 7 (MAKFSKG). A QXSXEXXXL motif is present at residues 8-16 (QISIELILL).

In terms of processing, the N-terminus is probably cleaved by the prepilin peptidase EppA, which recognizes the class III signal sequence.

It localises to the secreted. It is found in the cell surface. The protein resides in the fimbrium. This Methanococcus maripaludis (strain DSM 14266 / JCM 13030 / NBRC 101832 / S2 / LL) protein is Probable minor pilin MMP0600.